We begin with the raw amino-acid sequence, 365 residues long: 2-aminoethylphosphonate--pyruvate transaminase (365 aa).

Residue K194 is modified to N6-(pyridoxal phosphate)lysine.

Belongs to the class-V pyridoxal-phosphate-dependent aminotransferase family. PhnW subfamily. In terms of assembly, homodimer. Pyridoxal 5'-phosphate is required as a cofactor.

The enzyme catalyses (2-aminoethyl)phosphonate + pyruvate = phosphonoacetaldehyde + L-alanine. Functionally, involved in phosphonate degradation. The chain is 2-aminoethylphosphonate--pyruvate transaminase from Bacillus thuringiensis subsp. konkukian (strain 97-27).